Here is a 34-residue protein sequence, read N- to C-terminus: Toxin GTx1-15 (34 aa).

3 disulfide bridges follow: C2-C17, C9-C23, and C16-C30. Residue F34 is modified to Phenylalanine amide.

The protein belongs to the neurotoxin 10 (Hwtx-1) family. 08 (Gtx1-15) subfamily. As to expression, expressed by the venom gland.

It localises to the secreted. Its function is as follows. Potent voltage-gated sodium channel blocker. Potently inhibits the voltage-gated sodium channels Nav1.7/SCN9A (IC(50)=0.58-10 nM). Also shows a moderate activity on Nav1.1/SCN1A (IC(50)=6 nM), Nav1.2/SCN2A (IC(50)=5-128 nM), Nav1.3/SCN3A (IC(50)=20.3-170 nM), and Nav1.6/SCN8A (IC(50)=17-20.1 nM). Shows an unclear inhibition of Nav1.4/SCN4A (IC(50)=200 nM to &gt;10 uM), Nav1.5/SCN5A (IC(50)=140 nM to &gt;10 uM) and Nav1.8/SCN10A (IC(50)=68-12200 nM). Weakly blocks the low voltage-gated calcium channels Cav3.1/CACNA1G (30% inhibition of the peak current at 9.8 nM). shows moderate affinity for lipid bilayers. In vivo, when tested on the OD1-induced mouse model of Nav1.7/SCN9A-mediated pain, the toxin is effective when co-administered with OD1, but lacks efficacy when delivered systemically. In Grammostola porteri (Tarantula spider), this protein is Toxin GTx1-15.